The chain runs to 51 residues: MFRWAIIFAVIALLASFLGFGGVAGLSANFAYILLALAVILFIVAFVSRRT.

A run of 2 helical transmembrane segments spans residues 6-26 (IIFA…VAGL) and 28-47 (ANFA…VAFV).

It belongs to the UPF0391 family.

The protein localises to the cell membrane. This Psychrobacter arcticus (strain DSM 17307 / VKM B-2377 / 273-4) protein is UPF0391 membrane protein Psyc_0130.